We begin with the raw amino-acid sequence, 135 residues long: Transcriptional regulator HosA (135 aa).

Residues 4 to 134 (RNKAFHQLRQ…FMQLVRKMMN (131 aa)) form the HTH marR-type domain. Positions 48–71 (QVALIEAAVSTKATLAEMLARMEN) form a DNA-binding region, H-T-H motif.

Its function is as follows. Involved in the temperature-dependent positive control of flagellum-driven swimming motility and cellular aggregation. Regulates fliC expression by directly interacting with fliC promoter. The sequence is that of Transcriptional regulator HosA (hosA) from Escherichia coli O111:H-.